The following is a 393-amino-acid chain: Ninja-family protein 1 (393 aa).

Disordered regions lie at residues 1 to 27 (MEGF…PGQL) and 155 to 200 (NDDW…KEMN). The span at 156–170 (DDWKKRKEAQSLKRL) shows a compositional bias: basic and acidic residues.

This sequence belongs to the Ninja family.

It localises to the nucleus. This is Ninja-family protein 1 from Zea mays (Maize).